The following is a 269-amino-acid chain: Enoyl-[acyl-carrier-protein] reductase [NADH] (269 aa).

NAD(+) contacts are provided by residues 20–21 (SI), 64–65 (DV), and 95–96 (IG). Tyr158 is a binding site for substrate. Residues Lys165 and Ile194 each coordinate NAD(+).

The protein belongs to the short-chain dehydrogenases/reductases (SDR) family. FabI subfamily. Homodimer. Homotetramer.

It carries out the reaction a 2,3-saturated acyl-[ACP] + NAD(+) = a (2E)-enoyl-[ACP] + NADH + H(+). The enzyme catalyses a 2,3-saturated acyl-CoA + NAD(+) = a (2E)-enoyl-CoA + NADH + H(+). Its pathway is lipid metabolism; mycolic acid biosynthesis. Its function is as follows. Enoyl-ACP reductase of the type II fatty acid syntase (FAS-II) system, which is involved in the biosynthesis of mycolic acids, a major component of mycobacterial cell walls. Catalyzes the NADH-dependent reduction of the double bond of 2-trans-enoyl-[acyl-carrier protein], an essential step in the fatty acid elongation cycle of the FAS-II pathway. Shows preference for long-chain fatty acyl thioester substrates, and can also use 2-trans-enoyl-CoAs as alternative substrates. The mycobacterial FAS-II system utilizes the products of the FAS-I system as primers to extend fatty acyl chain lengths up to C56, forming the meromycolate chain that serves as the precursor for final mycolic acids. Functionally, is the primary target of the first-line antitubercular drug isoniazid (INH) and of the second-line drug ethionamide (ETH). Overexpressed inhA confers INH and ETH resistance to M.bovis. The mechanism of isoniazid action against InhA is covalent attachment of the activated form of the drug to the nicotinamide ring of NAD and binding of the INH-NAD adduct to the active site of InhA. Similarly, the ETH-NAD adduct binds InhA. The protein is Enoyl-[acyl-carrier-protein] reductase [NADH] of Mycobacterium bovis (strain ATCC BAA-935 / AF2122/97).